The following is a 284-amino-acid chain: MSAEKAKAYWQLMRMDRPIGSLLLLWPTVWALVIAAQGMPSWNVLIVFVLGVFLMRSAGCVINDFADRKVDGHVKRTKQRPLPSGKVTSKEAIGLFLVLGISSFLLVLTMNPLTIKLSFAGIFLAFIYPFMKRYTYLPQLFLGLAFSWAIPMAWAAQTGELPWIVWFVFVINALWTIAYDTQYAMVDRDDDLKIGIKSTAILFGRHDKLVIGVLQLVTLAMLVLLGQHYELGQSYYWTILVAASLFVYQQHLIRHRERDLCFKAFLNNNYVGIVIVIGLLIAFW.

Transmembrane regions (helical) follow at residues 33-53, 93-113, 136-156, 159-179, 209-229, 231-248, and 264-284; these read VIAA…LGVF, IGLF…MNPL, YLPQ…AWAA, GELP…TIAY, LVIG…GQHY, LGQS…LFVY, and AFLN…IAFW.

Belongs to the UbiA prenyltransferase family. Requires Mg(2+) as cofactor.

The protein resides in the cell inner membrane. It carries out the reaction all-trans-octaprenyl diphosphate + 4-hydroxybenzoate = 4-hydroxy-3-(all-trans-octaprenyl)benzoate + diphosphate. The protein operates within cofactor biosynthesis; ubiquinone biosynthesis. Its function is as follows. Catalyzes the prenylation of para-hydroxybenzoate (PHB) with an all-trans polyprenyl group. Mediates the second step in the final reaction sequence of ubiquinone-8 (UQ-8) biosynthesis, which is the condensation of the polyisoprenoid side chain with PHB, generating the first membrane-bound Q intermediate 3-octaprenyl-4-hydroxybenzoate. The sequence is that of 4-hydroxybenzoate octaprenyltransferase from Vibrio campbellii (strain ATCC BAA-1116).